The primary structure comprises 1388 residues: Putative ATP-dependent RNA helicase DHX57 (1388 aa).

Basic residues predominate over residues 1-11 (MSSSVRRKGKP). Disordered stretches follow at residues 1 to 107 (MSSS…MTSE) and 121 to 154 (EQGA…AGQE). Residues 34–51 (HGGGGGGGGSCGGGGGGS) show a composition bias toward gly residues. A compositionally biased stretch (basic and acidic residues) spans 79 to 89 (DSNKSKGETRP). A phosphoserine mark is found at Ser128 and Ser133. Residues 175–220 (PVPECAVSPLAVQKLSRYGFHTEHCQLALRICDGDLGAALEHLLRQ) enclose the UBA domain. The C3H1-type zinc-finger motif lies at 299–326 (DTSPETCKFYLKGNCKFGSKCKFKHEVP). Ser475 bears the Phosphoserine mark. One can recognise a Helicase ATP-binding domain in the interval 555–722 (LKLLSKHQVV…FSYCPVITIP (168 aa)). ATP is bound at residue 568–575 (GMTGCGKT). The DEVH box signature appears at 669–672 (DEVH). The Helicase C-terminal domain maps to 832 to 1012 (LIEALLEWIV…QLCLRIKILE (181 aa)).

The protein belongs to the DEAD box helicase family. DEAH subfamily.

The enzyme catalyses ATP + H2O = ADP + phosphate + H(+). In terms of biological role, probable ATP-binding RNA helicase. The chain is Putative ATP-dependent RNA helicase DHX57 (Dhx57) from Mus musculus (Mouse).